A 372-amino-acid polypeptide reads, in one-letter code: L-selectin (372 aa).

A signal peptide spans 1-28 (MVFPWRCEGTYWGSRNILKLWVWTLLCC). The propeptide occupies 29-38 (DFLIHHGTHC). The Extracellular portion of the chain corresponds to 39–332 (WTYHYSEKPM…FSKIKEGDYN (294 aa)). In terms of domain architecture, C-type lectin spans 55-155 (KFCKQNYTDL…ACHKRKAALC (101 aa)). Cystine bridges form between Cys-57–Cys-155, Cys-128–Cys-147, Cys-128–Cys-160, Cys-160–Cys-171, Cys-165–Cys-180, Cys-182–Cys-191, Cys-197–Cys-241, Cys-227–Cys-254, Cys-259–Cys-303, and Cys-289–Cys-316. N-linked (GlcNAc...) asparagine glycans are attached at residues Asn-60 and Asn-104. 5 residues coordinate Ca(2+): Glu-118, Asn-120, Glu-126, Asn-143, and Asp-144. The EGF-like domain maps to 156-192 (YTASCQPGSCNGRGECVETINNHTCICDAGYYGPQCQ). Asn-177 carries N-linked (GlcNAc...) asparagine glycosylation. Sushi domains lie at 195–256 (VQCE…ICQV) and 257–318 (VQCE…ICQE). N-linked (GlcNAc...) asparagine glycans are attached at residues Asn-216, Asn-226, Asn-246, Asn-278, Asn-288, Asn-308, and Asn-320. A helical transmembrane segment spans residues 333–355 (PLFIPVAVMVTAFSGLAFLIWLA). Topologically, residues 356 to 372 (RRLKKGKKSQERMDDPY) are cytoplasmic.

The protein belongs to the selectin/LECAM family. Interaction with SELPLG/PSGL1 and PODXL2 is required for promoting recruitment and rolling of leukocytes. This interaction is dependent on the sialyl Lewis X glycan modification of SELPLG and PODXL2, and tyrosine sulfation modifications of SELPLG. Sulfation on 'Tyr-51' of SELPLG is important for L-selectin binding. In terms of processing, N-glycosylated. In terms of tissue distribution, predominantly expressed in lymphoid tissue.

It is found in the cell membrane. Functionally, calcium-dependent lectin that mediates cell adhesion by binding to glycoproteins on neighboring cells. Mediates the adherence of lymphocytes to endothelial cells of high endothelial venules in peripheral lymph nodes. Promotes initial tethering and rolling of leukocytes in endothelia. The chain is L-selectin (Sell) from Mus musculus (Mouse).